The primary structure comprises 193 residues: AP-3 complex subunit sigma-2 (193 aa).

It belongs to the adaptor complexes small subunit family. As to quaternary structure, adaptor protein complex 3 (AP-3) is a heterotetramer composed of two large adaptins (delta-type subunit AP3D1 and beta-type subunit AP3B1 or AP3B2), a medium adaptin (mu-type subunit AP3M1 or AP3M2) and a small adaptin (sigma-type subunit APS1 or AP3S2). Interacts with AGAP1. AP-3 associates with the BLOC-1 complex.

The protein localises to the golgi apparatus. Its subcellular location is the cytoplasmic vesicle membrane. Functionally, part of the AP-3 complex, an adaptor-related complex which is not clathrin-associated. The complex is associated with the Golgi region as well as more peripheral structures. It facilitates the budding of vesicles from the Golgi membrane and may be directly involved in trafficking to lysosomes. In concert with the BLOC-1 complex, AP-3 is required to target cargos into vesicles assembled at cell bodies for delivery into neurites and nerve terminals. The sequence is that of AP-3 complex subunit sigma-2 (AP3S2) from Bos taurus (Bovine).